A 277-amino-acid polypeptide reads, in one-letter code: 2,3,4,5-tetrahydropyridine-2,6-dicarboxylate N-succinyltransferase (277 aa).

Substrate-binding residues include arginine 106 and aspartate 143.

The protein belongs to the transferase hexapeptide repeat family. In terms of assembly, homotrimer.

It localises to the cytoplasm. It catalyses the reaction (S)-2,3,4,5-tetrahydrodipicolinate + succinyl-CoA + H2O = (S)-2-succinylamino-6-oxoheptanedioate + CoA. It participates in amino-acid biosynthesis; L-lysine biosynthesis via DAP pathway; LL-2,6-diaminopimelate from (S)-tetrahydrodipicolinate (succinylase route): step 1/3. This chain is 2,3,4,5-tetrahydropyridine-2,6-dicarboxylate N-succinyltransferase, found in Xylella fastidiosa (strain 9a5c).